Reading from the N-terminus, the 153-residue chain is Regulatory protein RecX (153 aa).

The protein belongs to the RecX family.

It is found in the cytoplasm. Its function is as follows. Modulates RecA activity. The sequence is that of Regulatory protein RecX from Neisseria gonorrhoeae (strain ATCC 700825 / FA 1090).